Consider the following 188-residue polypeptide: Pyridoxal 5'-phosphate synthase subunit PdxT (188 aa).

Position 47–49 (47–49) interacts with L-glutamine; it reads GES. The Nucleophile role is filled by cysteine 79. L-glutamine contacts are provided by residues arginine 105 and 134-135; that span reads IR. Residues histidine 170 and glutamate 172 each act as charge relay system in the active site.

It belongs to the glutaminase PdxT/SNO family. In terms of assembly, in the presence of PdxS, forms a dodecamer of heterodimers. Only shows activity in the heterodimer.

It carries out the reaction aldehydo-D-ribose 5-phosphate + D-glyceraldehyde 3-phosphate + L-glutamine = pyridoxal 5'-phosphate + L-glutamate + phosphate + 3 H2O + H(+). The enzyme catalyses L-glutamine + H2O = L-glutamate + NH4(+). The protein operates within cofactor biosynthesis; pyridoxal 5'-phosphate biosynthesis. Functionally, catalyzes the hydrolysis of glutamine to glutamate and ammonia as part of the biosynthesis of pyridoxal 5'-phosphate. The resulting ammonia molecule is channeled to the active site of PdxS. This Listeria monocytogenes serotype 4b (strain F2365) protein is Pyridoxal 5'-phosphate synthase subunit PdxT.